We begin with the raw amino-acid sequence, 490 residues long: Probable glycine dehydrogenase (decarboxylating) subunit 2 (490 aa).

K273 is modified (N6-(pyridoxal phosphate)lysine).

Belongs to the GcvP family. C-terminal subunit subfamily. In terms of assembly, the glycine cleavage system is composed of four proteins: P, T, L and H. In this organism, the P 'protein' is a heterodimer of two subunits. It depends on pyridoxal 5'-phosphate as a cofactor.

The enzyme catalyses N(6)-[(R)-lipoyl]-L-lysyl-[glycine-cleavage complex H protein] + glycine + H(+) = N(6)-[(R)-S(8)-aminomethyldihydrolipoyl]-L-lysyl-[glycine-cleavage complex H protein] + CO2. Its function is as follows. The glycine cleavage system catalyzes the degradation of glycine. The P protein binds the alpha-amino group of glycine through its pyridoxal phosphate cofactor; CO(2) is released and the remaining methylamine moiety is then transferred to the lipoamide cofactor of the H protein. The polypeptide is Probable glycine dehydrogenase (decarboxylating) subunit 2 (Staphylococcus aureus (strain Newman)).